The sequence spans 1150 residues: Cohesin subunit SCC3 (1150 aa).

Over residues 1–12 (MTAVRRSTRIRT) the composition is skewed to basic residues. Residues 1 to 122 (MTAVRRSTRI…PAYHRSKKDQ (122 aa)) are disordered. At Ser-28 the chain carries Phosphoserine. The segment covering 32-43 (VESDKITAKTQH) has biased composition (basic and acidic residues). The segment covering 44–72 (EEEEEQDTGESEESSSEDDYEDQDDDDYV) has biased composition (acidic residues). Positions 77-87 (AKRKSRKRKPK) are enriched in basic residues. A coiled-coil region spans residues 305–349 (LTQQAVNLEKNYLAKLSKQLSLEEKKKRPNNKTLEKLESTIAETQ). Positions 367-457 (FVHRYKDVSD…ERFKTKILEV (91 aa)) constitute an SCD domain. Phosphoserine is present on Ser-628. The disordered stretch occupies residues 1065 to 1150 (ENPEPNKKNI…IDNSDEITQD (86 aa)). A compositionally biased stretch (basic and acidic residues) spans 1083–1101 (QREKAPLQPNSERETDHAN).

Belongs to the SCC3 family. Interacts directly with MCD1 in cohesin complex. Cohesin complexes are composed of the SMC1 and SMC3 heterodimer attached via their hinge domain, MCD1 which link them, and IRR1/SCC3, which interacts with MCD1. The cohesin complex also interacts with SCC2, which is required for its association with chromosomes. Interacts with LIN1. In terms of processing, acetylated by ECO1.

The protein localises to the nucleus. The protein resides in the chromosome. It is found in the centromere. Its function is as follows. Component of cohesin complex, a complex required for the cohesion of sister chromatids after DNA replication. The cohesin complex apparently forms a large proteinaceous ring within which sister chromatids can be trapped. At anaphase, the MCD1/SCC1 subunit of the complex is cleaved and dissociates from chromatin, allowing sister chromatids to segregate. The cohesin complex may also play a role in spindle pole assembly during mitosis. The protein is Cohesin subunit SCC3 (IRR1) of Saccharomyces cerevisiae (strain ATCC 204508 / S288c) (Baker's yeast).